The sequence spans 134 residues: FK506-binding protein 2 (134 aa).

The first 19 residues, 1-19 (MRILLLSALFLSLTTLVLS), serve as a signal peptide directing secretion. The PPIase FKBP-type domain occupies 39–127 (GDTVHMHYRG…IFETELVQIE (89 aa)). Residues 131–134 (NDEL) carry the Prevents secretion from ER motif.

The protein belongs to the FKBP-type PPIase family. FKBP2 subfamily.

It is found in the endoplasmic reticulum. It catalyses the reaction [protein]-peptidylproline (omega=180) = [protein]-peptidylproline (omega=0). Inhibited by both FK506 and rapamycin. Its function is as follows. PPIases accelerate the folding of proteins. It catalyzes the cis-trans isomerization of proline imidic peptide bonds in oligopeptides. In Aspergillus fumigatus (strain ATCC MYA-4609 / CBS 101355 / FGSC A1100 / Af293) (Neosartorya fumigata), this protein is FK506-binding protein 2 (fpr2).